The sequence spans 500 residues: MASILTTTEAQTRRREQYHEADVVVVGAGVFGCTMAFALANQGRSVLLLERWLKEPDRIVGELLQPGGVASLQKLGLGHCVEGIDAKPCYGYTIFYHGEKVLVPYPGIDDEGSPTHAWGGHSTGDRSTRPSGCSFHHGRFINKLRESCIAHKNITVVETEVVKTLRGEVSDQILGVESRTMNKETGKKEQDYYFGQLTIIADGYDSKWRQEVLKTKPKVCSKFYALELIDCDLPQPGHGHVIIGNAFPILLYQIGTHETRALIDVPQGIPEASPENGGVRGYIRNFVLPALPPSIRPSAEKALEDGKIPRSMPNSWLPPTKQRANGAILLGDAMNMRHPLTGGGMTVAFNDVVILSELLHPDKVGDLGDSKLINNALEELYWRRKPLTGIINVLAQALYSLFAANDRQLRALQYGCFTYFKNGDTDGPVALLAGILQRPFILAYHFFSVAFLAIWLNACSVVGCGILGIFKFPLAIIDAVLILWKACIVFIPIMWRESFQ.

A helical membrane pass occupies residues 20 to 40 (EADVVVVGAGVFGCTMAFALA). Residues 30 to 31 (VF), 50 to 51 (ER), R58, R145, D332, and M345 each bind FAD. The next 2 helical transmembrane spans lie at 450–470 (AFLA…LGIF) and 474–494 (LAII…IPIM).

This sequence belongs to the squalene monooxygenase family. Requires FAD as cofactor.

It is found in the microsome membrane. Its subcellular location is the endoplasmic reticulum membrane. The protein resides in the lipid droplet. The catalysed reaction is squalene + reduced [NADPH--hemoprotein reductase] + O2 = (S)-2,3-epoxysqualene + oxidized [NADPH--hemoprotein reductase] + H2O + H(+). The protein operates within terpene metabolism; lanosterol biosynthesis; lanosterol from farnesyl diphosphate: step 2/3. Its pathway is steroid metabolism; ergosterol biosynthesis. Squalene epoxidase; part of the third module of ergosterol biosynthesis pathway that includes the late steps of the pathway. ERG1 catalyzes the epoxidation of squalene into 2,3-epoxysqualene. The third module or late pathway involves the ergosterol synthesis itself through consecutive reactions that mainly occur in the endoplasmic reticulum (ER) membrane. Firstly, the squalene synthase ERG9 catalyzes the condensation of 2 farnesyl pyrophosphate moieties to form squalene, which is the precursor of all steroids. Squalene synthase is crucial for balancing the incorporation of farnesyl diphosphate (FPP) into sterol and nonsterol isoprene synthesis. Secondly, squalene is converted into lanosterol by the consecutive action of the squalene epoxidase ERG1 and the lanosterol synthase ERG7. Then, the delta(24)-sterol C-methyltransferase ERG6 methylates lanosterol at C-24 to produce eburicol. Eburicol is the substrate of the sterol 14-alpha demethylase encoded by CYP51A, CYP51B and CYP51C, to yield 4,4,24-trimethyl ergosta-8,14,24(28)-trienol. CYP51B encodes the enzyme primarily responsible for sterol 14-alpha-demethylation, and plays an essential role in ascospore formation. CYP51A encodes an additional sterol 14-alpha-demethylase, induced on ergosterol depletion and responsible for the intrinsic variation in azole sensitivity. The third CYP51 isoform, CYP51C, does not encode a sterol 14-alpha-demethylase, but is required for full virulence on host wheat ears. The C-14 reductase ERG24 then reduces the C14=C15 double bond which leads to 4,4-dimethylfecosterol. A sequence of further demethylations at C-4, involving the C-4 demethylation complex containing the C-4 methylsterol oxidases ERG25, the sterol-4-alpha-carboxylate 3-dehydrogenase ERG26 and the 3-keto-steroid reductase ERG27, leads to the production of fecosterol via 4-methylfecosterol. ERG28 has a role as a scaffold to help anchor ERG25, ERG26 and ERG27 to the endoplasmic reticulum. The C-8 sterol isomerase ERG2 then catalyzes the reaction which results in unsaturation at C-7 in the B ring of sterols and thus converts fecosterol to episterol. The sterol-C5-desaturases ERG3A and ERG3BB then catalyze the introduction of a C-5 double bond in the B ring to produce 5-dehydroepisterol. The C-22 sterol desaturases ERG5A and ERG5B further convert 5-dehydroepisterol into ergosta-5,7,22,24(28)-tetraen-3beta-ol by forming the C-22(23) double bond in the sterol side chain. Finally, ergosta-5,7,22,24(28)-tetraen-3beta-ol is substrate of the C-24(28) sterol reductase ERG4 to produce ergosterol. This Gibberella zeae (strain ATCC MYA-4620 / CBS 123657 / FGSC 9075 / NRRL 31084 / PH-1) (Wheat head blight fungus) protein is Squalene epoxidase ERG1.